Here is a 597-residue protein sequence, read N- to C-terminus: Arginine--tRNA ligase (597 aa).

The 'HIGH' region signature appears at 138–148 (ANPTGPMHVGH).

It belongs to the class-I aminoacyl-tRNA synthetase family. In terms of assembly, monomer.

Its subcellular location is the cytoplasm. The enzyme catalyses tRNA(Arg) + L-arginine + ATP = L-arginyl-tRNA(Arg) + AMP + diphosphate. The sequence is that of Arginine--tRNA ligase from Nitrobacter hamburgensis (strain DSM 10229 / NCIMB 13809 / X14).